The primary structure comprises 72 residues: Gas vesicle protein A (72 aa).

The protein belongs to the gas vesicle GvpA family. The gas vesicle shell is 2 nm thick and consists of a single layer of this protein. It forms helical ribs nearly perpendicular to the long axis of the vesicle.

The protein resides in the gas vesicle shell. In terms of biological role, gas vesicles are hollow, gas filled proteinaceous nanostructures found in some microorganisms. During planktonic growth they allow positioning of the organism at a favorable depth for light or nutrient acquisition. GvpA forms the protein shell. In Pseudanabaena galeata (strain PCC 6901), this protein is Gas vesicle protein A.